Consider the following 29-residue polypeptide: Omega-conotoxin MVIIC (29 aa).

The propeptide occupies 1–2; it reads TR. Disulfide bonds link cysteine 3–cysteine 18, cysteine 10–cysteine 22, and cysteine 17–cysteine 28. Cysteine 28 carries the cysteine amide modification.

The protein belongs to the conotoxin O1 superfamily. Not hydroxylated; hydroxylation, on a synthetic hydroxylated MVIIC, has a significant impact on the oxidative folding but not on the biological activity. As to expression, expressed by the venom duct.

The protein resides in the secreted. Omega-conotoxins act at presynaptic membranes, they bind and block voltage-gated calcium channels (Cav). This toxin preferentially blocks P/Q-type calcium channels (Cav2.1/CACNA1A) (IC(50)=0.60 nM). Also shows an inhibition on Cav2.2/CACNA1A channels (IC(50)=7.0 nM). This Conus magus (Magical cone) protein is Omega-conotoxin MVIIC.